A 508-amino-acid polypeptide reads, in one-letter code: tRNA(Ile2) 2-agmatinylcytidine synthetase TiaS (508 aa).

The OB DNA-binding region spans 367–427; it reads ITGGHVLIEL…YQLNIEKINV (61 aa).

The protein belongs to the TiaS family.

The protein localises to the cytoplasm. The enzyme catalyses cytidine(34) in tRNA(Ile2) + agmatine + ATP + H2O = 2-agmatinylcytidine(34) in tRNA(Ile2) + AMP + 2 phosphate + 2 H(+). Functionally, ATP-dependent agmatine transferase that catalyzes the formation of 2-agmatinylcytidine (agm2C) at the wobble position (C34) of tRNA(Ile2), converting the codon specificity from AUG to AUA. This Methanococcus voltae (strain ATCC BAA-1334 / A3) protein is tRNA(Ile2) 2-agmatinylcytidine synthetase TiaS.